The primary structure comprises 230 residues: UPF0173 metal-dependent hydrolase LI0883 (230 aa).

The protein belongs to the UPF0173 family.

The sequence is that of UPF0173 metal-dependent hydrolase LI0883 from Lawsonia intracellularis (strain PHE/MN1-00).